The sequence spans 178 residues: Caveolin-1 (178 aa).

Position 2 is an N-acetylserine (Ser2). Position 2 is a phosphoserine (Ser2). The required for homooligomerization stretch occupies residues 2-94; that stretch reads SGGKYVDSEG…WKASFTTFTV (93 aa). The Cytoplasmic portion of the chain corresponds to 2–104; that stretch reads SGGKYVDSEG…TKYWFYRLLS (103 aa). Position 5 is an N6-acetyllysine; alternate (Lys5). Lys5 is covalently cross-linked (Glycyl lysine isopeptide (Lys-Gly) (interchain with G-Cter in ubiquitin); alternate). Tyr6 carries the phosphotyrosine modification. Ser9 is modified (phosphoserine). Tyr14 bears the Phosphotyrosine; by ABL1 mark. Tyr25 carries the post-translational modification Phosphotyrosine. Residues Lys26, Lys30, Lys39, Lys47, and Lys57 each participate in a glycyl lysine isopeptide (Lys-Gly) (interchain with G-Cter in ubiquitin) cross-link. The interaction with CAVIN3 stretch occupies residues 82 to 94; that stretch reads DGIWKASFTTFTV. An intramembrane region (helical) is located at residues 105 to 125; that stretch reads ALFGIPMALIWGIYFAILSFL. Residues 126 to 178 are Cytoplasmic-facing; that stretch reads HIWAVVPCIKSFLIEIQCISRVYSIYVHTFCDPLFEAIGKIFSNIRINMQKEI. The interacts with SPRY1, SPRY2, SPRY3 and SPRY4 stretch occupies residues 131-142; the sequence is VPCIKSFLIEIQ. 3 S-palmitoyl cysteine lipidation sites follow: Cys133, Cys143, and Cys156. Residues 149–160 form an interacts with SPRY1, SPRY2, and SPRY4 region; it reads SIYVHTFCDPLF. Residues 167 to 178 are interacts with SPRY1, SPRY2, SPRY3 and SPRY4; that stretch reads FSNIRINMQKEI.

It belongs to the caveolin family. As to quaternary structure, homooligomer. Interacts with GLIPR2. Interacts with NOSTRIN. Interacts with SNAP25 and STX1A. Interacts (via the N-terminus) with DPP4; the interaction is direct. Interacts with CTNNB1, CDH1 and JUP. Interacts with PACSIN2; this interaction induces membrane tubulation. Interacts with SLC7A9. Interacts with BMX and BTK. Interacts with TGFBR1. Interacts with CAVIN3 (via leucine-zipper domain) in a cholesterol-sensitive manner. Interacts with CAVIN1. Interacts with EHD2 in a cholesterol-dependent manner. Forms a ternary complex with UBXN6 and VCP; mediates CAV1 targeting to lysosomes for degradation. Interacts with ABCG1; this interaction regulates ABCG1-mediated cholesterol efflux. Interacts with NEU3; this interaction enhances NEU3 sialidase activity within caveola. Interacts (via C-terminus) with SPRY1, SPRY2 (via C-terminus), SPRY3, and SPRY4. Interacts with IGFBP5; this interaction allows trafficking of IGFBP5 from the plasma membrane to the nucleus. Post-translationally, phosphorylated at Tyr-14 by ABL1 in response to oxidative stress. In terms of processing, ubiquitinated. Undergo monoubiquitination and multi- and/or polyubiquitination. Monoubiquitination of N-terminal lysines promotes integration in a ternary complex with UBXN6 and VCP which promotes oligomeric CAV1 targeting to lysosomes for degradation. Ubiquitinated by ZNRF1; leading to degradation and modulation of the TLR4-mediated immune response.

The protein resides in the golgi apparatus membrane. Its subcellular location is the cell membrane. It localises to the membrane. The protein localises to the caveola. It is found in the membrane raft. In terms of biological role, may act as a scaffolding protein within caveolar membranes. Forms a stable heterooligomeric complex with CAV2 that targets to lipid rafts and drives caveolae formation. Mediates the recruitment of CAVIN proteins (CAVIN1/2/3/4) to the caveolae. Interacts directly with G-protein alpha subunits and can functionally regulate their activity. Involved in the costimulatory signal essential for T-cell receptor (TCR)-mediated T-cell activation. Its binding to DPP4 induces T-cell proliferation and NF-kappa-B activation in a T-cell receptor/CD3-dependent manner. Recruits CTNNB1 to caveolar membranes and may regulate CTNNB1-mediated signaling through the Wnt pathway. Negatively regulates TGFB1-mediated activation of SMAD2/3 by mediating the internalization of TGFBR1 from membrane rafts leading to its subsequent degradation. Binds 20(S)-hydroxycholesterol (20(S)-OHC). In Muntiacus muntjak (Barking deer), this protein is Caveolin-1 (CAV1).